The following is a 148-amino-acid chain: Wheatwin-2 (148 aa).

Residues methionine 1–alanine 23 form the signal peptide. The residue at position 24 (glutamine 24) is a Pyrrolidone carboxylic acid. Positions glutamine 24 to aspartate 148 constitute a Barwin domain. Intrachain disulfides connect cysteine 54–cysteine 86, cysteine 75–cysteine 109, and cysteine 89–cysteine 146.

Monomer.

Functionally, shows antifungal activity towards B.cinerea and towards the wheat-specific pathogenic fungi F.culmorum and F.graminearum (groups 1 and 2). This Triticum aestivum (Wheat) protein is Wheatwin-2 (PR4B).